A 202-amino-acid chain; its full sequence is Small ribosomal subunit protein uS4c (202 aa).

In terms of domain architecture, S4 RNA-binding spans 90 to 158 (MRSDNVIFRL…ISKNIELYQK (69 aa)).

The protein belongs to the universal ribosomal protein uS4 family. Part of the 30S ribosomal subunit. Contacts protein S5. The interaction surface between S4 and S5 is involved in control of translational fidelity.

The protein resides in the plastid. It is found in the chloroplast. Its function is as follows. One of the primary rRNA binding proteins, it binds directly to 16S rRNA where it nucleates assembly of the body of the 30S subunit. In terms of biological role, with S5 and S12 plays an important role in translational accuracy. This Exsertotheca crispa (Moss) protein is Small ribosomal subunit protein uS4c (rps4).